We begin with the raw amino-acid sequence, 492 residues long: Catalase isozyme 1 (492 aa).

Residues histidine 65 and asparagine 138 contribute to the active site. A heme-binding site is contributed by tyrosine 348.

It belongs to the catalase family. Homotetramer. It depends on heme as a cofactor. In terms of tissue distribution, high expression in seeds and early seedlings.

The protein localises to the glyoxysome. The enzyme catalyses 2 H2O2 = O2 + 2 H2O. Its function is as follows. Occurs in almost all aerobically respiring organisms and serves to protect cells from the toxic effects of hydrogen peroxide. This Cucurbita pepo (Vegetable marrow) protein is Catalase isozyme 1 (CAT1).